Here is a 431-residue protein sequence, read N- to C-terminus: Adenylosuccinate synthetase (431 aa).

Residues 12–18 and 40–42 contribute to the GTP site; these read GDEGKGK and GHT. The active-site Proton acceptor is Asp13. Asp13 and Gly40 together coordinate Mg(2+). Residues 13-16, 38-41, Thr128, Arg142, Gln225, Thr240, and Arg304 each bind IMP; these read DEGK and NAGH. Catalysis depends on His41, which acts as the Proton donor. Residue 300–306 participates in substrate binding; it reads TTTGRPR. Residues Arg306, 332–334, and 414–416 contribute to the GTP site; these read KLD and GVG.

It belongs to the adenylosuccinate synthetase family. As to quaternary structure, homodimer. The cofactor is Mg(2+).

It is found in the cytoplasm. The catalysed reaction is IMP + L-aspartate + GTP = N(6)-(1,2-dicarboxyethyl)-AMP + GDP + phosphate + 2 H(+). It participates in purine metabolism; AMP biosynthesis via de novo pathway; AMP from IMP: step 1/2. In terms of biological role, plays an important role in the de novo pathway of purine nucleotide biosynthesis. Catalyzes the first committed step in the biosynthesis of AMP from IMP. This Thermomicrobium roseum (strain ATCC 27502 / DSM 5159 / P-2) protein is Adenylosuccinate synthetase.